Reading from the N-terminus, the 320-residue chain is Probable NAD(P)H-dependent D-xylose reductase xyl1 (320 aa).

The active-site Proton donor is Y50. H112 contacts substrate. NAD(+)-binding positions include 167 to 168 (SN), 216 to 225 (SSFGPLSFLE), and 272 to 282 (KSNNPTRLSQN).

This sequence belongs to the aldo/keto reductase family.

The enzyme catalyses xylitol + NAD(+) = D-xylose + NADH + H(+). It catalyses the reaction xylitol + NADP(+) = D-xylose + NADPH + H(+). It participates in carbohydrate metabolism; D-xylose degradation. Its function is as follows. Catalyzes the initial reaction in the xylose utilization pathway by reducing D-xylose into xylitol. Xylose is a major component of hemicelluloses such as xylan. Most fungi utilize D-xylose via three enzymatic reactions, xylose reductase (XR), xylitol dehydrogenase (XDH), and xylulokinase, to form xylulose 5-phosphate, which enters pentose phosphate pathway. The protein is Probable NAD(P)H-dependent D-xylose reductase xyl1 (xyl1) of Aspergillus terreus (strain NIH 2624 / FGSC A1156).